The chain runs to 142 residues: HTH-type transcriptional regulator MntR (142 aa).

The region spanning 1–63 (MTTPSMEDYI…YEKYRGLVLT (63 aa)) is the HTH dtxR-type domain. Positions 8, 11, 77, 99, 102, and 103 each coordinate Mn(2+).

The protein belongs to the DtxR/MntR family. In terms of assembly, homodimer.

It localises to the cytoplasm. Its activity is regulated as follows. DNA binding is strongly activated by Mn(2+). Functionally, central regulator of manganese homeostasis. This chain is HTH-type transcriptional regulator MntR, found in Bacillus velezensis (strain DSM 23117 / BGSC 10A6 / LMG 26770 / FZB42) (Bacillus amyloliquefaciens subsp. plantarum).